The following is a 518-amino-acid chain: Protein nucleotidyltransferase YdiU (518 aa).

Residues Gly99, Gly101, Arg102, Lys122, Asp134, Gly135, Arg192, and Arg199 each coordinate ATP. The active-site Proton acceptor is Asp270. 2 residues coordinate Mg(2+): Asn271 and Asp280. Asp280 is an ATP binding site.

This sequence belongs to the SELO family. Mg(2+) is required as a cofactor. The cofactor is Mn(2+).

It carries out the reaction L-seryl-[protein] + ATP = 3-O-(5'-adenylyl)-L-seryl-[protein] + diphosphate. It catalyses the reaction L-threonyl-[protein] + ATP = 3-O-(5'-adenylyl)-L-threonyl-[protein] + diphosphate. The catalysed reaction is L-tyrosyl-[protein] + ATP = O-(5'-adenylyl)-L-tyrosyl-[protein] + diphosphate. The enzyme catalyses L-histidyl-[protein] + UTP = N(tele)-(5'-uridylyl)-L-histidyl-[protein] + diphosphate. It carries out the reaction L-seryl-[protein] + UTP = O-(5'-uridylyl)-L-seryl-[protein] + diphosphate. It catalyses the reaction L-tyrosyl-[protein] + UTP = O-(5'-uridylyl)-L-tyrosyl-[protein] + diphosphate. In terms of biological role, nucleotidyltransferase involved in the post-translational modification of proteins. It can catalyze the addition of adenosine monophosphate (AMP) or uridine monophosphate (UMP) to a protein, resulting in modifications known as AMPylation and UMPylation. This Methylobacillus flagellatus (strain ATCC 51484 / DSM 6875 / VKM B-1610 / KT) protein is Protein nucleotidyltransferase YdiU.